The following is a 229-amino-acid chain: NAD-dependent protein deacylase (229 aa).

The Deacetylase sirtuin-type domain maps to 1 to 227; that stretch reads MKNLVILSGA…QDLMPKLIEM (227 aa). 9–28 is an NAD(+) binding site; the sequence is GAGISAESGIKTFRDADGLW. Y53 and R56 together coordinate substrate. 86–89 serves as a coordination point for NAD(+); that stretch reads QNVD. H104 (proton acceptor) is an active-site residue. 169–171 lines the NAD(+) pocket; sequence GTS.

Belongs to the sirtuin family. Class III subfamily.

The protein localises to the cytoplasm. It carries out the reaction N(6)-acetyl-L-lysyl-[protein] + NAD(+) + H2O = 2''-O-acetyl-ADP-D-ribose + nicotinamide + L-lysyl-[protein]. It catalyses the reaction N(6)-succinyl-L-lysyl-[protein] + NAD(+) + H2O = 2''-O-succinyl-ADP-D-ribose + nicotinamide + L-lysyl-[protein]. Its function is as follows. NAD-dependent lysine deacetylase and desuccinylase that specifically removes acetyl and succinyl groups on target proteins. Modulates the activities of several proteins which are inactive in their acylated form. This chain is NAD-dependent protein deacylase, found in Helicobacter pylori (strain ATCC 700392 / 26695) (Campylobacter pylori).